Consider the following 278-residue polypeptide: Large ribosomal subunit protein uL2 (278 aa).

A disordered region spans residues 212–278; that stretch reads NRHRGIRPQT…IISRKKHKKG (67 aa). Over residues 257–278 the composition is skewed to basic residues; that stretch reads YKTRKKKASDKLIISRKKHKKG.

The protein belongs to the universal ribosomal protein uL2 family. Part of the 50S ribosomal subunit. Forms a bridge to the 30S subunit in the 70S ribosome.

In terms of biological role, one of the primary rRNA binding proteins. Required for association of the 30S and 50S subunits to form the 70S ribosome, for tRNA binding and peptide bond formation. It has been suggested to have peptidyltransferase activity; this is somewhat controversial. Makes several contacts with the 16S rRNA in the 70S ribosome. This Helicobacter pylori (strain Shi470) protein is Large ribosomal subunit protein uL2.